A 153-amino-acid chain; its full sequence is Aspartate carbamoyltransferase regulatory chain (153 aa).

Zn(2+) is bound by residues Cys109, Cys114, Cys138, and Cys141.

Belongs to the PyrI family. Contains catalytic and regulatory chains. Requires Zn(2+) as cofactor.

Its function is as follows. Involved in allosteric regulation of aspartate carbamoyltransferase. This is Aspartate carbamoyltransferase regulatory chain from Cronobacter sakazakii (strain ATCC BAA-894) (Enterobacter sakazakii).